Reading from the N-terminus, the 448-residue chain is Death-associated protein kinase 3 (448 aa).

The Protein kinase domain maps to 13-275 (YEMGEELGSG…IAQSLEHSWI (263 aa)). ATP contacts are provided by residues 19–27 (LGSGQFAIV) and K42. Catalysis depends on D139, which acts as the Proton acceptor. The segment at 161–204 (DFGIAHRIEAGSEFKNIFGTPEFVAPEIVNYEPLGLEADMWSIG) is activation segment. T180 and T225 each carry phosphothreonine. T265 carries the post-translational modification Phosphothreonine; by autocatalysis. T265 bears the Phosphothreonine; by ROCK1 mark. S304 is modified (phosphoserine; by DAPK1). Residue S306 is modified to Phosphoserine; by autocatalysis and DAPK1. A phosphoserine; by DAPK1 mark is found at S307, S313, and S321. Positions 390–448 (AQEEARAALLGAGGLKRRLCRLENRYDALAAQVAAEVQFVRDLVRALEQERLQAECGVR) are interaction with CDC5L. Positions 418–448 (LAAQVAAEVQFVRDLVRALEQERLQAECGVR) are required for interaction with ATF4 but not with PAWR. The segment at 422-436 (VAAEVQFVRDLVRAL) is leucine-zipper.

It belongs to the protein kinase superfamily. CAMK Ser/Thr protein kinase family. DAP kinase subfamily. In terms of assembly, homooligomer in its kinase-active form (homotrimers and homodimers are reported); monomeric in its kinase-inactive form. Homodimerization is required for activation segment autophosphorylation. Interacts with DAXX, ATF4, NLK, TCF7L2, UBE2D1, UBE2D2, UBE2D3 and CDC5L. Interacts with PAWR; also demonstrated in aorta smooth muscle cells indicative for the cytoskeletal targeting function of PAWR. Interacts with AR; enhanced by AATF. Interacts with LUZP1; the interaction is likely to occur throughout the cell cycle and reduces the LUZP1-mediated suppression of MYL9 phosphorylation. Mg(2+) serves as cofactor. Ubiquitinated. Ubiquitination mediated by the UBE2D3 E3 ligase does not lead to proteasomal degradation, but influences promyelocytic leukemia protein nuclear bodies (PML-NBs) formation in the nucleus. In terms of processing, the phosphorylation status is critical for kinase activity, oligomerization and intracellular localization. Phosphorylation at Thr-180, Thr-225 and Thr-265 is essential for activity. The phosphorylated form is localized in the cytoplasm and nuclear translocation or retention is maximal when it is not phosphorylated. Phosphorylation increases the trimeric form, and its dephosphorylation favors a kinase-inactive monomeric form. In terms of tissue distribution, ubiquitously expressed in all tissue types examined. High levels in brain, heart, lung and spleen, lower expression in kidney, liver, skeletal muscle and testis. Isoform 2 is expressed in the smooth muscle.

It is found in the nucleus. Its subcellular location is the PML body. It localises to the cytoplasm. The protein resides in the cytoskeleton. The protein localises to the microtubule organizing center. It is found in the chromosome. Its subcellular location is the centromere. It localises to the spindle. The protein resides in the midbody. It carries out the reaction L-seryl-[protein] + ATP = O-phospho-L-seryl-[protein] + ADP + H(+). The enzyme catalyses L-threonyl-[protein] + ATP = O-phospho-L-threonyl-[protein] + ADP + H(+). A sequential activation is proposed: autophosphorylation at consensus sites is leading to dimerization of the catalytic domain and activation segment exchange (producing an active confirmation of both kinase modules in trans) followed by phosphorylation at Thr-180 in the activation segment and at other regulatory sites. Phosphorylation at Thr-180, Thr-225 and Thr-265 is essential for activity. Inhibited by pyridone 6 (K00225), a potent, ATP-competitive inhibitor. Phosphorylation at Thr-180, Thr-225 and Thr-265 is essential for activity. Functionally, serine/threonine kinase which is involved in the regulation of apoptosis, autophagy, transcription, translation and actin cytoskeleton reorganization. Regulates both type I (caspase-dependent) apoptotic and type II (caspase-independent) autophagic cell deaths signal, depending on the cellular setting. Involved in formation of promyelocytic leukemia protein nuclear body (PML-NB). Involved in apoptosis involving PAWR which mediates cytoplasmic relocation; in vitro phosphorylates PAWR. Regulates myosin phosphorylation in both smooth muscle and non-muscle cells. In smooth muscle, regulates myosin either directly by phosphorylating MYL12B and MYL9 or through inhibition of smooth muscle myosin phosphatase (SMPP1M) via phosphorylation of PPP1R12A; the inhibition of SMPP1M functions to enhance muscle responsiveness to Ca(2+) and promote a contractile state. Phosphorylates MYL12B in non-muscle cells leading to reorganization of actin cytoskeleton such as in regulation of cell polarity and cell migration. Positively regulates canonical Wnt/beta-catenin signaling through interaction with NLK and TCF7L2; disrupts the NLK-TCF7L2 complex thereby influencing the phosphorylation of TCF7L2 by NLK. Phosphorylates RPL13A on 'Ser-77' upon interferon-gamma activation which is causing RPL13A release from the ribosome, RPL13A association with the GAIT complex and its subsequent involvement in transcript-selective translation inhibition. Phosphorylates STAT3 and enhances its transcriptional activity. Enhances transcription from AR-responsive promoters in a hormone- and kinase-dependent manner. Phosphorylates histone H3 on 'Thr-11' at centromeres during mitosis. The chain is Death-associated protein kinase 3 (Dapk3) from Rattus norvegicus (Rat).